A 577-amino-acid chain; its full sequence is Zinc finger-containing ubiquitin peptidase 1 (577 aa).

The C2H2-type 1 zinc-finger motif lies at 2–24 (LSCDICGETVTSEPDRKAHLIVH). The C2H2-type 2; atypical zinc-finger motif lies at 29-52 (IICPFCKLSGINYNEMCFHIETAH). 2 C2H2-type zinc fingers span residues 153-176 (PECP…KTKH) and 192-214 (YDCP…VDLH). The segment at 225 to 247 (DRVQCSSDRELAHQLQQEEERKR) is MIU. Basic and acidic residues predominate over residues 231–261 (SDRELAHQLQQEEERKRKSEESRQEREEFQK). A disordered region spans residues 231-262 (SDRELAHQLQQEEERKRKSEESRQEREEFQKL). Residues 248–273 (KSEESRQEREEFQKLQRQYGLDNSGG) are zUBD/ZHA. Lysine 261 carries the N6-acetyllysine modification. The active-site Nucleophile is cysteine 359. Histidine 490 acts as the Proton acceptor in catalysis. The active site involves aspartate 511.

Belongs to the peptidase C78 family. ZUFSP subfamily. Interacts with RPA1 and RPA2.

It is found in the cytoplasm. The protein resides in the nucleus. The enzyme catalyses Thiol-dependent hydrolysis of ester, thioester, amide, peptide and isopeptide bonds formed by the C-terminal Gly of ubiquitin (a 76-residue protein attached to proteins as an intracellular targeting signal).. Its function is as follows. Deubiquitinase with endodeubiquitinase activity that specifically interacts with and cleaves 'Lys-63'-linked long polyubiquitin chains. Shows only weak activity against 'Lys-11' and 'Lys-48'-linked chains. Plays an important role in genome stability pathways, functioning to prevent spontaneous DNA damage and also promote cellular survival in response to exogenous DNA damage. Modulates the ubiquitination status of replication protein A (RPA) complex proteins in response to replication stress. The chain is Zinc finger-containing ubiquitin peptidase 1 from Rattus norvegicus (Rat).